The primary structure comprises 330 residues: Glycerol-3-phosphate dehydrogenase [NAD(P)+] (330 aa).

Residues Trp11, Arg31, His32, and Lys105 each coordinate NADPH. Sn-glycerol 3-phosphate-binding residues include Lys105 and Gly133. Ala137 contributes to the NADPH binding site. Residues Lys188, Asp241, Ser251, Arg252, and Asn253 each coordinate sn-glycerol 3-phosphate. Lys188 acts as the Proton acceptor in catalysis. An NADPH-binding site is contributed by Arg252. Residues Leu277 and Glu279 each coordinate NADPH.

Belongs to the NAD-dependent glycerol-3-phosphate dehydrogenase family.

Its subcellular location is the cytoplasm. The enzyme catalyses sn-glycerol 3-phosphate + NAD(+) = dihydroxyacetone phosphate + NADH + H(+). It carries out the reaction sn-glycerol 3-phosphate + NADP(+) = dihydroxyacetone phosphate + NADPH + H(+). It functions in the pathway membrane lipid metabolism; glycerophospholipid metabolism. In terms of biological role, catalyzes the reduction of the glycolytic intermediate dihydroxyacetone phosphate (DHAP) to sn-glycerol 3-phosphate (G3P), the key precursor for phospholipid synthesis. The protein is Glycerol-3-phosphate dehydrogenase [NAD(P)+] of Orientia tsutsugamushi (strain Boryong) (Rickettsia tsutsugamushi).